Here is a 317-residue protein sequence, read N- to C-terminus: DNA repair nuclease/redox regulator APEX1 (317 aa).

Residues 1–58 are disordered; it reads MPKRGKKAAADDGEEPKSEPETKKSKGAAKKTEKEAAGEGPVLYEDPPDQKTSPSGKS. The necessary for interaction with YBX1, binding to RNA, association together with NPM1 to rRNA, endoribonuclease activity on abasic RNA and localization in the nucleoli stretch occupies residues 2–32; that stretch reads PKRGKKAAADDGEEPKSEPETKKSKGAAKKT. 2 positions are modified to N6-acetyllysine; by EP300: lysine 6 and lysine 7. Positions 8 to 12 match the Nuclear localization signal (NLS) motif; it reads AAADD. Residues 15 to 37 are compositionally biased toward basic and acidic residues; that stretch reads EPKSEPETKKSKGAAKKTEKEAA. At serine 18 the chain carries Phosphoserine. The tract at residues 22-32 is necessary for interaction with NPM1 and for efficient rRNA binding; sequence TKKSKGAAKKT. An N6-acetyllysine mark is found at lysine 26, lysine 30, lysine 31, and lysine 34. Residue serine 53 is modified to Phosphoserine. The short motif at 63–79 is the Nuclear export signal (NES) element; it reads ICSWNVDGLRAWIKKKG. Cysteine 64 carries the post-translational modification S-nitrosocysteine; alternate. A disulfide bridge connects residues cysteine 64 and cysteine 92. Aspartate 69 lines the Mg(2+) pocket. Cysteine 92 carries the S-nitrosocysteine; alternate modification. Glutamate 95 is a binding site for Mg(2+). Tyrosine 170 is an active-site residue. Lysine 196 carries the post-translational modification N6-acetyllysine. Residues aspartate 209 and asparagine 211 each coordinate Mg(2+). Catalysis depends on aspartate 209, which acts as the Proton donor/acceptor. Position 232 is a phosphothreonine; by CDK5 (threonine 232). Residues 288–317 are mitochondrial targeting sequence (MTS); the sequence is HSLLPALCDSKIRSKALGSDHCPITLYLAL. Residue aspartate 307 coordinates Mg(2+). Cysteine 309 carries the post-translational modification S-nitrosocysteine.

This sequence belongs to the DNA repair enzymes AP/ExoA family. Monomer. Homodimer; disulfide-linked. Component of the SET complex, composed of at least APEX1, SET, ANP32A, HMGB2, NME1 and TREX1. Associates with the dimer XRCC5/XRCC6 in a DNA-dependent manner. Interacts with SIRT1; the interaction is increased in the context of genotoxic stress. Interacts with HDAC1, HDAC2 and HDAC3; the interactions are not dependent on the APEX1 acetylation status. Interacts with XRCC1; the interaction is induced by SIRT1 and increased with the APEX1 acetylated form. Interacts with NPM1 (via N-terminal domain); the interaction is RNA-dependent and decreases in hydrogen peroxide-damaged cells. Interacts (via N-terminus) with YBX1 (via C-terminus); the interaction is increased in presence of APEX1 acetylated at Lys-6 and Lys-7. Interacts with HNRNPL; the interaction is DNA-dependent. Interacts (via N-terminus) with KPNA1 and KPNA2. Interacts with TXN; the interaction stimulates the FOS/JUN AP-1 complex DNA-binding activity in a redox-dependent manner. Interacts with GZMA, KRT8, MDM2, POLB, PRDX6, PRPF19, RPLP0, TOMM20 and WDR77. Binds to CDK5. It depends on Mg(2+) as a cofactor. Requires Mn(2+) as cofactor. Phosphorylated. Phosphorylation by kinase PKC or casein kinase CK2 results in enhanced redox activity that stimulates binding of the FOS/JUN AP-1 complex to its cognate binding site. AP-endodeoxyribonuclease activity is not affected by CK2-mediated phosphorylation. Phosphorylation of Thr-232 by CDK5 in response to MPP(+)/MPTP (1-methyl-4-phenylpyridinium) reduces AP-endodeoxyribonuclease activity resulting in accumulation of DNA damage and contributing to neuronal death. Post-translationally, acetylated on Lys-6 and Lys-7. Acetylation is increased by the transcriptional coactivator EP300 acetyltransferase, genotoxic agents like H(2)O(2) and methyl methanesulfonate (MMS). Acetylation increases its binding affinity to the negative calcium response element (nCaRE) DNA promoter. The acetylated form induces a stronger binding of YBX1 to the Y-box sequence in the MDR1 promoter than the unacetylated form. Deacetylated on lysines. Lys-6 and Lys-7 are deacetylated by SIRT1. In terms of processing, cleaved at Lys-30 by granzyme A to create the mitochondrial form; leading in reduction of binding to DNA, AP endodeoxyribonuclease activity, redox activation of transcription factors and to enhanced cell death. Cleaved by granzyme K; leading to intracellular ROS accumulation and enhanced cell death after oxidative stress. Cys-64 and Cys-92 are nitrosylated in response to nitric oxide (NO) and lead to the exposure of the nuclear export signal (NES). Post-translationally, ubiquitinated by MDM2; leading to translocation to the cytoplasm and proteasomal degradation. In terms of tissue distribution, expressed in both resting and stimulated B cells stimulated to switch (at protein level).

The protein resides in the nucleus. The protein localises to the nucleolus. It is found in the nucleus speckle. Its subcellular location is the endoplasmic reticulum. It localises to the cytoplasm. The protein resides in the mitochondrion. The catalysed reaction is a deoxyribonucleotide-2'-deoxyribose-5'-monophosphate-DNA + H2O = a 5'-end 2'-deoxyribose-5'-monophosphate-DNA + a 3'-end 2'-deoxyribonucleotide-DNA + H(+). It catalyses the reaction Exonucleolytic cleavage in the 3'- to 5'-direction to yield nucleoside 5'-phosphates.. The enzyme catalyses a 3'-end 2'-deoxyribonucleotide-3'-phosphoglycolate-DNA + H2O = 2-phosphoglycolate + a 3'-end 2'-deoxyribonucleotide-DNA + H(+). It carries out the reaction a 3'-end 2'-deoxyribonucleotide-8-oxoguanine-DNA + H2O = 8-oxo-dGMP + a 3'-end 2'-deoxyribonucleotide-DNA + H(+). Its activity is regulated as follows. NPM1 stimulates endodeoxyribonuclease activity on double-stranded DNA with AP sites, but inhibits endoribonuclease activity on single-stranded RNA containing AP sites. Functionally, multifunctional protein that plays a central role in the cellular response to oxidative stress. The two major activities of APEX1 are DNA repair and redox regulation of transcriptional factors. Functions as an apurinic/apyrimidinic (AP) endodeoxyribonuclease in the base excision repair (BER) pathway of DNA lesions induced by oxidative and alkylating agents. Initiates repair of AP sites in DNA by catalyzing hydrolytic incision of the phosphodiester backbone immediately adjacent to the damage, generating a single-strand break with 5'-deoxyribose phosphate and 3'-hydroxyl ends. Also incises at AP sites in the DNA strand of DNA/RNA hybrids, single-stranded DNA regions of R-loop structures, and single-stranded RNA molecules. Operates at switch sites of immunoglobulin (Ig) constant regions where it mediates Ig isotype class switch recombination. Processes AP sites induced by successive action of AICDA and UNG. Generates staggered nicks in opposite DNA strands resulting in the formation of double-strand DNA breaks that are finally resolved via non-homologous end joining repair pathway. Has 3'-5' exodeoxyribonuclease activity on mismatched deoxyribonucleotides at the 3' termini of nicked or gapped DNA molecules during short-patch BER. Possesses DNA 3' phosphodiesterase activity capable of removing lesions (such as phosphoglycolate and 8-oxoguanine) blocking the 3' side of DNA strand breaks. Also acts as an endoribonuclease involved in the control of single-stranded RNA metabolism. Plays a role in regulating MYC mRNA turnover by preferentially cleaving in between UA and CA dinucleotides of the MYC coding region determinant (CRD). In association with NMD1, plays a role in the rRNA quality control process during cell cycle progression. Acts as a loading factor for POLB onto non-incised AP sites in DNA and stimulates the 5'-terminal deoxyribose 5'-phosphate (dRp) excision activity of POLB. Exerts reversible nuclear redox activity to regulate DNA binding affinity and transcriptional activity of transcriptional factors by controlling the redox status of their DNA-binding domain, such as the FOS/JUN AP-1 complex after exposure to IR. Involved in calcium-dependent down-regulation of parathyroid hormone (PTH) expression by binding to negative calcium response elements (nCaREs). Together with HNRNPL or the dimer XRCC5/XRCC6, associates with nCaRE, acting as an activator of transcriptional repression. May also play a role in the epigenetic regulation of gene expression by participating in DNA demethylation. Stimulates the YBX1-mediated MDR1 promoter activity, when acetylated at Lys-6 and Lys-7, leading to drug resistance. Plays a role in protection from granzyme-mediated cellular repair leading to cell death. Binds DNA and RNA. Associates, together with YBX1, on the MDR1 promoter. Together with NPM1, associates with rRNA. This is DNA repair nuclease/redox regulator APEX1 (Apex1) from Mus musculus (Mouse).